The chain runs to 260 residues: MVLIRVLANLLILQLSYAQKSSKLVIGGDECNINEHRFLVALYTSRTLFCGGTLINQEWVLTAAHCNMEDIQIKLGMHSKKVPNEDEQKRVPKEKFFCLSSKNYTLWDKDIMLIRLDSPVKNSAHIAPLSLPSSPPSVGSDCRTMGWGRISSTKETYPDVPHCVNINLLEYEMCRAPYPEFELPATSRTLCAGILEGGKDTCVGDSGGPLICNGQSQGIASWGDDPCAQPHRPAAYTKVFDHLDWIENIIAGNTDASCPP.

A signal peptide spans 1–18; that stretch reads MVLIRVLANLLILQLSYA. Residues 19–24 constitute a propeptide that is removed on maturation; sequence QKSSKL. One can recognise a Peptidase S1 domain in the interval 25-251; that stretch reads VIGGDECNIN…HLDWIENIIA (227 aa). Cystine bridges form between C31–C163, C50–C66, C98–C258, C142–C212, C174–C191, and C202–C227. The active-site Charge relay system is H65. A glycan (N-linked (GlcNAc...) asparagine) is linked at N103. Residue D110 is the Charge relay system of the active site. The Charge relay system role is filled by S206.

The protein belongs to the peptidase S1 family. Snake venom subfamily. As to quaternary structure, monomer. Expressed by the venom gland.

It is found in the secreted. Snake venom serine protease that may act in the hemostasis system of the prey. This Gloydius halys (Chinese water mocassin) protein is Snake venom serine protease pallabin (JZTHR5).